Reading from the N-terminus, the 243-residue chain is uncharacterized protein (243 aa).

The interval 71 to 120 (KRTNVSQRNRKKGIKNNRPHKDINSSPDWGNAHRGTDWQSEKANGMNRAK) is disordered. Basic residues predominate over residues 78-88 (RNRKKGIKNNR). Serine 96 is subject to Phosphoserine.

This is an uncharacterized protein from Saccharomyces cerevisiae (strain ATCC 204508 / S288c) (Baker's yeast).